Here is a 166-residue protein sequence, read N- to C-terminus: ATP synthase subunit b (166 aa).

A helical transmembrane segment spans residues 15–37 (TLYYLLIFAALLLLVKHFAWGPV).

It belongs to the ATPase B chain family. F-type ATPases have 2 components, F(1) - the catalytic core - and F(0) - the membrane proton channel. F(1) has five subunits: alpha(3), beta(3), gamma(1), delta(1), epsilon(1). F(0) has three main subunits: a(1), b(2) and c(10-14). The alpha and beta chains form an alternating ring which encloses part of the gamma chain. F(1) is attached to F(0) by a central stalk formed by the gamma and epsilon chains, while a peripheral stalk is formed by the delta and b chains.

The protein resides in the cell membrane. In terms of biological role, f(1)F(0) ATP synthase produces ATP from ADP in the presence of a proton or sodium gradient. F-type ATPases consist of two structural domains, F(1) containing the extramembraneous catalytic core and F(0) containing the membrane proton channel, linked together by a central stalk and a peripheral stalk. During catalysis, ATP synthesis in the catalytic domain of F(1) is coupled via a rotary mechanism of the central stalk subunits to proton translocation. Component of the F(0) channel, it forms part of the peripheral stalk, linking F(1) to F(0). This is ATP synthase subunit b from Lactobacillus johnsonii (strain CNCM I-12250 / La1 / NCC 533).